A 99-amino-acid chain; its full sequence is Ubiquitin-related modifier 1 homolog (99 aa).

Glycine 99 bears the 1-thioglycine mark. Glycine 99 participates in a covalent cross-link: Glycyl lysine isopeptide (Gly-Lys) (interchain with K-? in acceptor proteins).

The protein belongs to the URM1 family. In terms of assembly, interacts with cer. C-terminal thiocarboxylation occurs in 2 steps, it is first acyl-adenylated (-COAMP) via the hesA/moeB/thiF part of the MOCS3 homolog, then thiocarboxylated (-COSH) via the rhodanese domain of the MOCS3 homolog.

It localises to the cytoplasm. Its pathway is tRNA modification; 5-methoxycarbonylmethyl-2-thiouridine-tRNA biosynthesis. Its function is as follows. Acts as a sulfur carrier required for 2-thiolation of mcm(5)S(2)U at tRNA wobble positions of cytosolic tRNA(Lys), tRNA(Glu) and tRNA(Gln). Serves as sulfur donor in tRNA 2-thiolation reaction by being thiocarboxylated (-COSH) at its C-terminus by MOCS3. The sulfur is then transferred to tRNA to form 2-thiolation of mcm(5)S(2)U. Also acts as a ubiquitin-like protein (UBL) that is covalently conjugated via an isopeptide bond to lysine residues of target proteins such as Prx2/Jafrac1, Ciao1, Eip71CD and GILT1. The thiocarboxylated form serves as substrate for conjugation and oxidative stress specifically induces the formation of UBL-protein conjugates. In Drosophila persimilis (Fruit fly), this protein is Ubiquitin-related modifier 1 homolog.